The chain runs to 143 residues: Large ribosomal subunit protein uL13 (143 aa).

This sequence belongs to the universal ribosomal protein uL13 family. Part of the 50S ribosomal subunit.

This protein is one of the early assembly proteins of the 50S ribosomal subunit, although it is not seen to bind rRNA by itself. It is important during the early stages of 50S assembly. This Dehalococcoides mccartyi (strain CBDB1) protein is Large ribosomal subunit protein uL13.